The chain runs to 322 residues: Protein-L-isoaspartate O-methyltransferase (322 aa).

The disordered stretch occupies residues Met-1 to Pro-101. Over residues Glu-14 to Glu-29 the composition is skewed to basic and acidic residues. Low complexity-rich tracts occupy residues Ala-33–Ala-51 and His-76–Gly-91. Ser-170 is a catalytic residue.

This sequence belongs to the methyltransferase superfamily. L-isoaspartyl/D-aspartyl protein methyltransferase family.

The protein localises to the cytoplasm. It catalyses the reaction [protein]-L-isoaspartate + S-adenosyl-L-methionine = [protein]-L-isoaspartate alpha-methyl ester + S-adenosyl-L-homocysteine. Its function is as follows. Catalyzes the methyl esterification of L-isoaspartyl residues in peptides and proteins that result from spontaneous decomposition of normal L-aspartyl and L-asparaginyl residues. It plays a role in the repair and/or degradation of damaged proteins. This Burkholderia pseudomallei (strain 1106a) protein is Protein-L-isoaspartate O-methyltransferase.